A 382-amino-acid chain; its full sequence is Succinyl-diaminopimelate desuccinylase (382 aa).

Histidine 68 provides a ligand contact to Zn(2+). The active site involves aspartate 70. Position 101 (aspartate 101) interacts with Zn(2+). The active-site Proton acceptor is glutamate 135. Zn(2+) is bound by residues glutamate 136, glutamate 164, and histidine 350.

This sequence belongs to the peptidase M20A family. DapE subfamily. Homodimer. Zn(2+) serves as cofactor. Requires Co(2+) as cofactor.

It carries out the reaction N-succinyl-(2S,6S)-2,6-diaminopimelate + H2O = (2S,6S)-2,6-diaminopimelate + succinate. It participates in amino-acid biosynthesis; L-lysine biosynthesis via DAP pathway; LL-2,6-diaminopimelate from (S)-tetrahydrodipicolinate (succinylase route): step 3/3. In terms of biological role, catalyzes the hydrolysis of N-succinyl-L,L-diaminopimelic acid (SDAP), forming succinate and LL-2,6-diaminopimelate (DAP), an intermediate involved in the bacterial biosynthesis of lysine and meso-diaminopimelic acid, an essential component of bacterial cell walls. The sequence is that of Succinyl-diaminopimelate desuccinylase from Acidithiobacillus ferrooxidans (strain ATCC 23270 / DSM 14882 / CIP 104768 / NCIMB 8455) (Ferrobacillus ferrooxidans (strain ATCC 23270)).